A 130-amino-acid polypeptide reads, in one-letter code: Glycine cleavage system H protein (130 aa).

The Lipoyl-binding domain occupies 24–106 (GIKVGISAFA…YQEGWLLKIT (83 aa)). Lys65 carries the post-translational modification N6-lipoyllysine.

This sequence belongs to the GcvH family. The glycine cleavage system is composed of four proteins: P, T, L and H. The cofactor is (R)-lipoate.

Its function is as follows. The glycine cleavage system catalyzes the degradation of glycine. The H protein shuttles the methylamine group of glycine from the P protein to the T protein. The sequence is that of Glycine cleavage system H protein from Synechococcus sp. (strain RCC307).